Here is a 393-residue protein sequence, read N- to C-terminus: S-adenosylmethionine synthase (393 aa).

H16 provides a ligand contact to ATP. A Mg(2+)-binding site is contributed by D18. Position 44 (E44) interacts with K(+). E57 and Q100 together coordinate L-methionine. The flexible loop stretch occupies residues 100–110 (QSQDIAQGVDK). Residues 167–169 (DAK), 238–239 (RF), D247, 253–254 (RK), A270, and K274 contribute to the ATP site. Residue D247 participates in L-methionine binding. K278 provides a ligand contact to L-methionine.

The protein belongs to the AdoMet synthase family. Homotetramer; dimer of dimers. Requires Mg(2+) as cofactor. It depends on K(+) as a cofactor.

It is found in the cytoplasm. The enzyme catalyses L-methionine + ATP + H2O = S-adenosyl-L-methionine + phosphate + diphosphate. Its pathway is amino-acid biosynthesis; S-adenosyl-L-methionine biosynthesis; S-adenosyl-L-methionine from L-methionine: step 1/1. Functionally, catalyzes the formation of S-adenosylmethionine (AdoMet) from methionine and ATP. The overall synthetic reaction is composed of two sequential steps, AdoMet formation and the subsequent tripolyphosphate hydrolysis which occurs prior to release of AdoMet from the enzyme. This is S-adenosylmethionine synthase from Delftia acidovorans (strain DSM 14801 / SPH-1).